The primary structure comprises 340 residues: Cell invasion protein SipD (340 aa).

Disordered regions lie at residues 1-26 and 57-76; these read MLNI…PSAS and QAQQ…NDER. Residues 291–319 are a coiled coil; it reads FKAQEENLKTTLQTLTQKYSNANSLYDNL.

This sequence belongs to the invasin protein D family.

It localises to the secreted. Its function is as follows. Required for translocation of effector proteins via the type III secretion system SPI-1, which is essential for an efficient bacterial internalization. Probably acts by modulating the secretion of SipA, SipB, and SipC. The polypeptide is Cell invasion protein SipD (sipD) (Salmonella typhi).